We begin with the raw amino-acid sequence, 369 residues long: Chorismate synthase (369 aa).

Arg-48 and Arg-54 together coordinate NADP(+). Residues 125–127, 238–239, Gly-278, 293–297, and Arg-319 each bind FMN; these read RSS, NA, and KPTSS.

It belongs to the chorismate synthase family. In terms of assembly, homotetramer. Requires FMNH2 as cofactor.

The catalysed reaction is 5-O-(1-carboxyvinyl)-3-phosphoshikimate = chorismate + phosphate. It functions in the pathway metabolic intermediate biosynthesis; chorismate biosynthesis; chorismate from D-erythrose 4-phosphate and phosphoenolpyruvate: step 7/7. Functionally, catalyzes the anti-1,4-elimination of the C-3 phosphate and the C-6 proR hydrogen from 5-enolpyruvylshikimate-3-phosphate (EPSP) to yield chorismate, which is the branch point compound that serves as the starting substrate for the three terminal pathways of aromatic amino acid biosynthesis. This reaction introduces a second double bond into the aromatic ring system. This chain is Chorismate synthase, found in Cupriavidus necator (strain ATCC 17699 / DSM 428 / KCTC 22496 / NCIMB 10442 / H16 / Stanier 337) (Ralstonia eutropha).